We begin with the raw amino-acid sequence, 372 residues long: Aminomethyltransferase (372 aa).

Belongs to the GcvT family. The glycine cleavage system is composed of four proteins: P, T, L and H.

It catalyses the reaction N(6)-[(R)-S(8)-aminomethyldihydrolipoyl]-L-lysyl-[protein] + (6S)-5,6,7,8-tetrahydrofolate = N(6)-[(R)-dihydrolipoyl]-L-lysyl-[protein] + (6R)-5,10-methylene-5,6,7,8-tetrahydrofolate + NH4(+). Functionally, the glycine cleavage system catalyzes the degradation of glycine. In Burkholderia mallei (strain NCTC 10247), this protein is Aminomethyltransferase.